The following is an 86-amino-acid chain: Small ribosomal subunit protein eS27 (86 aa).

A C4-type zinc finger spans residues 39-61 (CQGCFNITTVFSHSQTVVVCPGC).

The protein belongs to the eukaryotic ribosomal protein eS27 family. The cofactor is Zn(2+).

This is Small ribosomal subunit protein eS27 (RPS27) from Hordeum vulgare (Barley).